The following is a 570-amino-acid chain: Urease subunit alpha (570 aa).

A Urease domain is found at 131–570; it reads GGFDSHIHFI…LPMAQRYFMY (440 aa). Ni(2+) is bound by residues H136, H138, and K219. K219 carries the N6-carboxylysine modification. H221 contacts substrate. The Ni(2+) site is built by H248 and H274. The Proton donor role is filled by H322. D362 serves as a coordination point for Ni(2+).

This sequence belongs to the metallo-dependent hydrolases superfamily. Urease alpha subunit family. Heterotrimer of UreA (gamma), UreB (beta) and UreC (alpha) subunits. Three heterotrimers associate to form the active enzyme. It depends on Ni cation as a cofactor. Post-translationally, carboxylation allows a single lysine to coordinate two nickel ions.

The protein localises to the cytoplasm. It catalyses the reaction urea + 2 H2O + H(+) = hydrogencarbonate + 2 NH4(+). The protein operates within nitrogen metabolism; urea degradation; CO(2) and NH(3) from urea (urease route): step 1/1. This Rhodopseudomonas palustris (strain BisB18) protein is Urease subunit alpha.